Consider the following 348-residue polypeptide: tRNA N6-adenosine threonylcarbamoyltransferase (348 aa).

Positions 115 and 119 each coordinate Fe cation. Substrate is bound by residues 138 to 142, Asp-171, Gly-184, and Asn-276; that span reads LVSGG. Residue Asp-304 coordinates Fe cation.

This sequence belongs to the KAE1 / TsaD family. Fe(2+) is required as a cofactor.

The protein localises to the cytoplasm. It carries out the reaction L-threonylcarbamoyladenylate + adenosine(37) in tRNA = N(6)-L-threonylcarbamoyladenosine(37) in tRNA + AMP + H(+). Required for the formation of a threonylcarbamoyl group on adenosine at position 37 (t(6)A37) in tRNAs that read codons beginning with adenine. Is involved in the transfer of the threonylcarbamoyl moiety of threonylcarbamoyl-AMP (TC-AMP) to the N6 group of A37, together with TsaE and TsaB. TsaD likely plays a direct catalytic role in this reaction. This chain is tRNA N6-adenosine threonylcarbamoyltransferase, found in Xylella fastidiosa (strain 9a5c).